The chain runs to 372 residues: Pristinol synthase (372 aa).

Over residues 1-12 (MAHETTSGRRLP) the composition is skewed to basic and acidic residues. Positions 1–23 (MAHETTSGRRLPDPTSPSDPTRR) are disordered. Mg(2+)-binding residues include Asp-100 and Asp-104. The DDXXD motif motif lies at 100–104 (DDQFD). Arg-197 provides a ligand contact to substrate. Mg(2+)-binding residues include Asn-243 and Ser-247. Residue Lys-250 participates in substrate binding. Glu-251 is a binding site for Mg(2+). 337–338 (RY) provides a ligand contact to substrate. Residues 349–372 (GRRRPWDGLTTATGTASPRHPRRA) form a disordered region.

The protein belongs to the terpene synthase family. It depends on Mg(2+) as a cofactor.

The enzyme catalyses (2E,6E)-farnesyl diphosphate + H2O = (+)-(2S,3R,9R)-pristinol + diphosphate. Its pathway is secondary metabolite biosynthesis; terpenoid biosynthesis. Functionally, catalyzes the conversion of (2E,6E)-farnesyl diphosphate (FPP) to yield a new 5-8 bicyclic (pristinane) sesquiterpenol (+)-(2S,3R,9R)-pristinol via a 1,11-cyclization, which requires the abstraction of the pyrophosphate from FPP to yield the humulyl cation. The only accepted substrate is farnesyl diphosphate (FPP). The protein is Pristinol synthase of Streptomyces pristinaespiralis (strain ATCC 25486 / DSM 40338 / CBS 914.69 / JCM 4507 / KCC S-0507 / NBRC 13074 / NRRL 2958 / 5647).